A 536-amino-acid chain; its full sequence is Phosphoenolpyruvate carboxykinase (ATP) (536 aa).

Residues Arg61, Tyr195, and Lys201 each coordinate substrate. ATP contacts are provided by residues Lys201, His220, and 236–244 (GLSGTGKTT). Lys201 and His220 together coordinate Mn(2+). Position 257 (Asp257) interacts with Mn(2+). ATP-binding residues include Glu285, Arg323, and Thr448. Arg323 contributes to the substrate binding site.

The protein belongs to the phosphoenolpyruvate carboxykinase (ATP) family. The cofactor is Mn(2+).

Its subcellular location is the cytoplasm. The enzyme catalyses oxaloacetate + ATP = phosphoenolpyruvate + ADP + CO2. The protein operates within carbohydrate biosynthesis; gluconeogenesis. Its function is as follows. Involved in the gluconeogenesis. Catalyzes the conversion of oxaloacetate (OAA) to phosphoenolpyruvate (PEP) through direct phosphoryl transfer between the nucleoside triphosphate and OAA. In Methylobacterium sp. (strain 4-46), this protein is Phosphoenolpyruvate carboxykinase (ATP).